Reading from the N-terminus, the 291-residue chain is Light-independent protochlorophyllide reductase iron-sulfur ATP-binding protein (291 aa).

Residues 10 to 15 (GIGKST) and K39 each bind ATP. S14 serves as a coordination point for Mg(2+). Residues C95 and C129 each coordinate [4Fe-4S] cluster. Residue 180 to 181 (NR) coordinates ATP.

Belongs to the NifH/BchL/ChlL family. In terms of assembly, homodimer. Protochlorophyllide reductase is composed of three subunits; ChlL, ChlN and ChlB. [4Fe-4S] cluster is required as a cofactor.

It is found in the plastid. It localises to the chloroplast. It carries out the reaction chlorophyllide a + oxidized 2[4Fe-4S]-[ferredoxin] + 2 ADP + 2 phosphate = protochlorophyllide a + reduced 2[4Fe-4S]-[ferredoxin] + 2 ATP + 2 H2O. It participates in porphyrin-containing compound metabolism; chlorophyll biosynthesis (light-independent). Component of the dark-operative protochlorophyllide reductase (DPOR) that uses Mg-ATP and reduced ferredoxin to reduce ring D of protochlorophyllide (Pchlide) to form chlorophyllide a (Chlide). This reaction is light-independent. The L component serves as a unique electron donor to the NB-component of the complex, and binds Mg-ATP. This is Light-independent protochlorophyllide reductase iron-sulfur ATP-binding protein from Pinus koraiensis (Korean pine).